Here is a 138-residue protein sequence, read N- to C-terminus: Phosphoribosyl-AMP cyclohydrolase (138 aa).

A Mg(2+)-binding site is contributed by D84. Zn(2+) is bound at residue C85. Residues D86 and D88 each coordinate Mg(2+). Positions 102 and 109 each coordinate Zn(2+).

The protein belongs to the PRA-CH family. As to quaternary structure, homodimer. Requires Mg(2+) as cofactor. Zn(2+) is required as a cofactor.

It is found in the cytoplasm. The catalysed reaction is 1-(5-phospho-beta-D-ribosyl)-5'-AMP + H2O = 1-(5-phospho-beta-D-ribosyl)-5-[(5-phospho-beta-D-ribosylamino)methylideneamino]imidazole-4-carboxamide. It functions in the pathway amino-acid biosynthesis; L-histidine biosynthesis; L-histidine from 5-phospho-alpha-D-ribose 1-diphosphate: step 3/9. Catalyzes the hydrolysis of the adenine ring of phosphoribosyl-AMP. The sequence is that of Phosphoribosyl-AMP cyclohydrolase from Burkholderia cenocepacia (strain ATCC BAA-245 / DSM 16553 / LMG 16656 / NCTC 13227 / J2315 / CF5610) (Burkholderia cepacia (strain J2315)).